We begin with the raw amino-acid sequence, 117 residues long: Mitochondrial zinc maintenance protein 1, mitochondrial (117 aa).

Residues 1–10 (MSSVLSAYRN) constitute a mitochondrion transit peptide. Positions 98–117 (RKEMGSLAGKKGSSIKSCND) are disordered.

Belongs to the complex I LYR family. MZM1 subfamily. Interacts with RIP1.

It localises to the mitochondrion matrix. Its function is as follows. Assembly factor required for Rieske Fe-S protein RIP1 incorporation into the cytochrome b-c1 (CIII) complex. Functions as a chaperone, binding to this subunit within the mitochondrial matrix and stabilizing it prior to its translocation and insertion into the late CIII dimeric intermediate within the mitochondrial inner membrane. Modulates the mitochondrial matrix zinc pool. This is Mitochondrial zinc maintenance protein 1, mitochondrial (MZM1) from Candida albicans (strain SC5314 / ATCC MYA-2876) (Yeast).